Consider the following 606-residue polypeptide: Aspartate--tRNA(Asp/Asn) ligase (606 aa).

E177 contributes to the L-aspartate binding site. Positions 201–204 (QIFK) are aspartate. R223 contacts L-aspartate. ATP is bound by residues 223–225 (RDE) and Q232. H461 is an L-aspartate binding site. Residue E499 participates in ATP binding. An L-aspartate-binding site is contributed by R506. An ATP-binding site is contributed by 551–554 (GLDR).

The protein belongs to the class-II aminoacyl-tRNA synthetase family. Type 1 subfamily. As to quaternary structure, homodimer.

It is found in the cytoplasm. It catalyses the reaction tRNA(Asx) + L-aspartate + ATP = L-aspartyl-tRNA(Asx) + AMP + diphosphate. In terms of biological role, aspartyl-tRNA synthetase with relaxed tRNA specificity since it is able to aspartylate not only its cognate tRNA(Asp) but also tRNA(Asn). Reaction proceeds in two steps: L-aspartate is first activated by ATP to form Asp-AMP and then transferred to the acceptor end of tRNA(Asp/Asn). The chain is Aspartate--tRNA(Asp/Asn) ligase from Prochlorococcus marinus (strain MIT 9211).